Reading from the N-terminus, the 1229-residue chain is DNA-directed RNA polymerase subunit beta (1229 aa).

Belongs to the RNA polymerase beta chain family. As to quaternary structure, the RNAP catalytic core consists of 2 alpha, 1 beta, 1 beta' and 1 omega subunit. When a sigma factor is associated with the core the holoenzyme is formed, which can initiate transcription.

The enzyme catalyses RNA(n) + a ribonucleoside 5'-triphosphate = RNA(n+1) + diphosphate. Functionally, DNA-dependent RNA polymerase catalyzes the transcription of DNA into RNA using the four ribonucleoside triphosphates as substrates. This Roseiflexus sp. (strain RS-1) protein is DNA-directed RNA polymerase subunit beta.